A 427-amino-acid chain; its full sequence is UPF0229 protein YeaH (427 aa).

A compositionally biased stretch (basic and acidic residues) spans Asn-79–Arg-90. The tract at residues Asn-79–Glu-110 is disordered. The span at Gln-92 to Gln-102 shows a compositional bias: gly residues.

This sequence belongs to the UPF0229 family.

This chain is UPF0229 protein YeaH, found in Escherichia coli (strain K12 / MC4100 / BW2952).